Consider the following 153-residue polypeptide: 6,7-dimethyl-8-ribityllumazine synthase (153 aa).

5-amino-6-(D-ribitylamino)uracil contacts are provided by residues phenylalanine 22, 56 to 58, and 80 to 82; these read AFE and TVI. 85 to 86 contacts (2S)-2-hydroxy-3-oxobutyl phosphate; that stretch reads ST. Catalysis depends on histidine 88, which acts as the Proton donor. 5-amino-6-(D-ribitylamino)uracil is bound at residue phenylalanine 113. Arginine 127 contacts (2S)-2-hydroxy-3-oxobutyl phosphate.

Belongs to the DMRL synthase family. As to quaternary structure, forms an icosahedral capsid composed of 60 subunits, arranged as a dodecamer of pentamers.

It catalyses the reaction (2S)-2-hydroxy-3-oxobutyl phosphate + 5-amino-6-(D-ribitylamino)uracil = 6,7-dimethyl-8-(1-D-ribityl)lumazine + phosphate + 2 H2O + H(+). It functions in the pathway cofactor biosynthesis; riboflavin biosynthesis; riboflavin from 2-hydroxy-3-oxobutyl phosphate and 5-amino-6-(D-ribitylamino)uracil: step 1/2. Functionally, catalyzes the formation of 6,7-dimethyl-8-ribityllumazine by condensation of 5-amino-6-(D-ribitylamino)uracil with 3,4-dihydroxy-2-butanone 4-phosphate. This is the penultimate step in the biosynthesis of riboflavin. The sequence is that of 6,7-dimethyl-8-ribityllumazine synthase from Actinobacillus pleuropneumoniae serotype 7 (strain AP76).